A 251-amino-acid polypeptide reads, in one-letter code: MVTSTGPEAELAPIEQAKKRAAFACGEKYVQSGCRLGVGSGSTVKYLVEYLKQGFQNGSLKDIICVPTSFLTKQWLIESGLPVSDLDSHPELDVCIDGADEVDGQFTCIKGGGGCLAQEKIVQTAAKNFYVIADYLKDSKHLGDRYPNVPIEVLPLAAQPLLRSIPRAEGGSCQLRQAVKKCGPIVTDNGNFIIDWQFEKNVSGRDWFAIQQRLANTPGIVETGLFIGCVDAVFFAYSDGSVKEIVNSKKH.

Belongs to the ribose 5-phosphate isomerase family.

The enzyme catalyses aldehydo-D-ribose 5-phosphate = D-ribulose 5-phosphate. It functions in the pathway carbohydrate degradation; pentose phosphate pathway; D-ribose 5-phosphate from D-ribulose 5-phosphate (non-oxidative stage): step 1/1. In Caenorhabditis elegans, this protein is Probable-ribose 5-phosphate isomerase (rpia-1).